A 417-amino-acid polypeptide reads, in one-letter code: Tyrosine--tRNA ligase (417 aa).

Tyr-34 provides a ligand contact to L-tyrosine. The 'HIGH' region motif lies at 39–48; the sequence is PSGDSLHIGH. 2 residues coordinate L-tyrosine: Tyr-165 and Gln-169. The 'KMSKS' region motif lies at 227-231; it reads KFGKT. Lys-230 is an ATP binding site. An S4 RNA-binding domain is found at 349–415; sequence ANIVDWLVDT…GKKNYTLAKV (67 aa).

Belongs to the class-I aminoacyl-tRNA synthetase family. TyrS type 1 subfamily. In terms of assembly, homodimer.

It is found in the cytoplasm. The enzyme catalyses tRNA(Tyr) + L-tyrosine + ATP = L-tyrosyl-tRNA(Tyr) + AMP + diphosphate + H(+). Its function is as follows. Catalyzes the attachment of tyrosine to tRNA(Tyr) in a two-step reaction: tyrosine is first activated by ATP to form Tyr-AMP and then transferred to the acceptor end of tRNA(Tyr). This Limosilactobacillus fermentum (strain NBRC 3956 / LMG 18251) (Lactobacillus fermentum) protein is Tyrosine--tRNA ligase.